Here is an 804-residue protein sequence, read N- to C-terminus: Protein translocase subunit SecA (804 aa).

ATP is bound by residues glutamine 100, 118–122 (GEGKT), and aspartate 508.

Belongs to the SecA family. In terms of assembly, monomer and homodimer. Part of the essential Sec protein translocation apparatus which comprises SecA, SecYEG and auxiliary proteins SecDF. Other proteins may also be involved.

It localises to the cell membrane. It is found in the cytoplasm. It catalyses the reaction ATP + H2O + cellular proteinSide 1 = ADP + phosphate + cellular proteinSide 2.. Part of the Sec protein translocase complex. Interacts with the SecYEG preprotein conducting channel. Has a central role in coupling the hydrolysis of ATP to the transfer of proteins into and across the cell membrane, serving as an ATP-driven molecular motor driving the stepwise translocation of polypeptide chains across the membrane. This is Protein translocase subunit SecA from Leuconostoc citreum (strain KM20).